A 417-amino-acid chain; its full sequence is Prostaglandin E2 receptor EP3 subtype (417 aa).

The Extracellular segment spans residues 1 to 52 (MKATRDHASAPFCTRFNHSDPGIWAAERAVEAPNNLTLPPEPSEDCGSVSVA). Residues Asn17 and Asn35 are each glycosylated (N-linked (GlcNAc...) asparagine). A helical transmembrane segment spans residues 53-77 (FSMTMMITGFVGNALAITLVSKSYR). Residues 78–90 (RREGKRKKSFLLC) lie on the Cytoplasmic side of the membrane. The helical transmembrane segment at 91-111 (IGWLALTDMVGQLLTSPVVIV) threads the bilayer. Residues 112 to 130 (LYLSHQRWEQLDPSGRLCT) lie on the Extracellular side of the membrane. The chain crosses the membrane as a helical span at residues 131 to 152 (FFGLTMTVFGLSSLFIASAMAV). Over 153-174 (ERALATRAPHWYSSHMKTSVTR) the chain is Cytoplasmic. A helical transmembrane segment spans residues 175–196 (AVLLGVWLAVLAFALLPVLGVG). Over 197–226 (QYTIQWPGTWCFISTGPGGNGTNSRQNWGN) the chain is Extracellular. The N-linked (GlcNAc...) asparagine glycan is linked to Asn216. The chain crosses the membrane as a helical span at residues 227-252 (VFFASAFAILGLSALVVTFACNLATI). Residues 253 to 282 (KALVSRCRAKATASQSSAQWGRITTETAIQ) are Cytoplasmic-facing. A helical membrane pass occupies residues 283-306 (LMGIMCVLSVCWSPLLIMMLKMIF). N-linked (GlcNAc...) asparagine glycosylation occurs at Asn307. Residues 307–326 (NHTSVEHCKTYTENQDECNF) lie on the Extracellular side of the membrane. The chain crosses the membrane as a helical span at residues 327–348 (FLIAVRLASLNQILDPWVYLLL). At 349-417 (RKILLQKFCQ…HIYLHTLEHQ (69 aa)) the chain is on the cytoplasmic side.

This sequence belongs to the G-protein coupled receptor 1 family. As to quaternary structure, interacts (via C-terminus) with MKLN1.

Its subcellular location is the cell membrane. In terms of biological role, receptor for prostaglandin E2 (PGE2). The various isoforms have identical ligand binding properties but interact with different second messenger systems: isoform EP3A couples to G(i)/G(o) proteins; isoform EP3B and isoform EP3C couple to G(s), and isoform EP3D couples to G(i), G(s) and G(p). Required for normal development of fever in response to pyrinogens, including IL1B, prostaglandin E2 and bacterial lipopolysaccharide (LPS). Required for normal potentiation of platelet aggregation by prostaglandin E2, and thus plays a role in the regulation of blood coagulation. Required for increased HCO3(-) secretion in the duodenum in response to mucosal acidification, and thereby contributes to the protection of the mucosa against acid-induced ulceration. Not required for normal kidney function, normal urine volume and osmolality. In Bos taurus (Bovine), this protein is Prostaglandin E2 receptor EP3 subtype (PTGER3).